The sequence spans 266 residues: 3-methyl-2-oxobutanoate hydroxymethyltransferase (266 aa).

Aspartate 45 and aspartate 84 together coordinate Mg(2+). 3-methyl-2-oxobutanoate is bound by residues 45 to 46 (DS), aspartate 84, and lysine 113. Glutamate 115 is a Mg(2+) binding site. Glutamate 183 (proton acceptor) is an active-site residue.

The protein belongs to the PanB family. In terms of assembly, homodecamer; pentamer of dimers. Requires Mg(2+) as cofactor.

Its subcellular location is the cytoplasm. The catalysed reaction is 3-methyl-2-oxobutanoate + (6R)-5,10-methylene-5,6,7,8-tetrahydrofolate + H2O = 2-dehydropantoate + (6S)-5,6,7,8-tetrahydrofolate. The protein operates within cofactor biosynthesis; (R)-pantothenate biosynthesis; (R)-pantoate from 3-methyl-2-oxobutanoate: step 1/2. Its function is as follows. Catalyzes the reversible reaction in which hydroxymethyl group from 5,10-methylenetetrahydrofolate is transferred onto alpha-ketoisovalerate to form ketopantoate. In Coxiella burnetii (strain CbuG_Q212) (Coxiella burnetii (strain Q212)), this protein is 3-methyl-2-oxobutanoate hydroxymethyltransferase.